A 125-amino-acid polypeptide reads, in one-letter code: Homeobox protein HD-8 (125 aa).

A DNA-binding region (homeobox) is located at residues 30-89 (EPDTRTRKTTFQMMVLKEVFKIAPHPSTLTKADLALMIKLPLKAVQIWFQNERSRKERGG).

Its subcellular location is the nucleus. The sequence is that of Homeobox protein HD-8 (HD-8) from Encephalitozoon cuniculi (strain GB-M1) (Microsporidian parasite).